A 268-amino-acid chain; its full sequence is HTH-type transcriptional activator RhaS (268 aa).

Positions 171–268 (RQMIRWLENN…YSIAPRELRI (98 aa)) constitute an HTH araC/xylS-type domain. 2 consecutive DNA-binding regions (H-T-H motif) follow at residues 188 to 209 (EELA…KSQT) and 236 to 259 (IINI…KNEY).

As to quaternary structure, binds DNA as a dimer.

Its subcellular location is the cytoplasm. In terms of biological role, activates expression of the rhaBAD and rhaT operons. In Mannheimia succiniciproducens (strain KCTC 0769BP / MBEL55E), this protein is HTH-type transcriptional activator RhaS.